A 251-amino-acid chain; its full sequence is 1-(5-phosphoribosyl)-5-[(5-phosphoribosylamino)methylideneamino] imidazole-4-carboxamide isomerase (251 aa).

Residue Asp-8 is the Proton acceptor of the active site. Asp-131 serves as the catalytic Proton donor.

This sequence belongs to the HisA/HisF family.

The protein resides in the cytoplasm. The catalysed reaction is 1-(5-phospho-beta-D-ribosyl)-5-[(5-phospho-beta-D-ribosylamino)methylideneamino]imidazole-4-carboxamide = 5-[(5-phospho-1-deoxy-D-ribulos-1-ylimino)methylamino]-1-(5-phospho-beta-D-ribosyl)imidazole-4-carboxamide. Its pathway is amino-acid biosynthesis; L-histidine biosynthesis; L-histidine from 5-phospho-alpha-D-ribose 1-diphosphate: step 4/9. The sequence is that of 1-(5-phosphoribosyl)-5-[(5-phosphoribosylamino)methylideneamino] imidazole-4-carboxamide isomerase from Burkholderia ambifaria (strain MC40-6).